Here is a 128-residue protein sequence, read N- to C-terminus: Large ribosomal subunit protein bL17 (128 aa).

This sequence belongs to the bacterial ribosomal protein bL17 family. As to quaternary structure, part of the 50S ribosomal subunit. Contacts protein L32.

The polypeptide is Large ribosomal subunit protein bL17 (Streptococcus pneumoniae serotype 2 (strain D39 / NCTC 7466)).